A 273-amino-acid chain; its full sequence is MDNIDSYDNYSEELSSFNPIFRNFTHITSDSENLDSQFIKNSLGVDLDKYTKDSSLLFMIESEYFCDFCNGKPLNLIKYYLLVVLGSSKDVSDPIGYIPYPDKSSIHDCNLYNEFFMKHPHSLLQQDESSCNGDCKLDDLMTLCKWCPICYNKLCNATNLQKILRSAISFTAIPQSSVLYVRRNTKKINYNDINDLELVKKFLNYDKLKIECIKQRIENADNKIKTYVEMITKEKIYNTKILETLLEERGGSLENYNCLITGIDSLLNKNTDN.

This is an uncharacterized protein from Acanthamoeba polyphaga (Amoeba).